A 218-amino-acid chain; its full sequence is ATP-dependent Clp protease proteolytic subunit 2 (218 aa).

The active-site Nucleophile is Ser114. His139 is an active-site residue.

It belongs to the peptidase S14 family. In terms of assembly, fourteen ClpP subunits assemble into 2 heptameric rings which stack back to back to give a disk-like structure with a central cavity, resembling the structure of eukaryotic proteasomes.

The protein localises to the cytoplasm. It carries out the reaction Hydrolysis of proteins to small peptides in the presence of ATP and magnesium. alpha-casein is the usual test substrate. In the absence of ATP, only oligopeptides shorter than five residues are hydrolyzed (such as succinyl-Leu-Tyr-|-NHMec, and Leu-Tyr-Leu-|-Tyr-Trp, in which cleavage of the -Tyr-|-Leu- and -Tyr-|-Trp bonds also occurs).. Cleaves peptides in various proteins in a process that requires ATP hydrolysis. Has a chymotrypsin-like activity. Plays a major role in the degradation of misfolded proteins. Probably partially responsible for degradation of ECF sigma factor SigR prime. In Streptomyces coelicolor (strain ATCC BAA-471 / A3(2) / M145), this protein is ATP-dependent Clp protease proteolytic subunit 2.